The chain runs to 756 residues: 1,4-alpha-glucan branching enzyme GlgB (756 aa).

Asp-431 functions as the Nucleophile in the catalytic mechanism. Glu-484 acts as the Proton donor in catalysis.

It belongs to the glycosyl hydrolase 13 family. GlgB subfamily. As to quaternary structure, monomer.

It carries out the reaction Transfers a segment of a (1-&gt;4)-alpha-D-glucan chain to a primary hydroxy group in a similar glucan chain.. It participates in glycan biosynthesis; glycogen biosynthesis. Its function is as follows. Catalyzes the formation of the alpha-1,6-glucosidic linkages in glycogen by scission of a 1,4-alpha-linked oligosaccharide from growing alpha-1,4-glucan chains and the subsequent attachment of the oligosaccharide to the alpha-1,6 position. The sequence is that of 1,4-alpha-glucan branching enzyme GlgB from Prochlorococcus marinus (strain MIT 9303).